A 537-amino-acid polypeptide reads, in one-letter code: Chaperonin GroEL (537 aa).

ATP contacts are provided by residues 31-34, 87-91, Gly-415, and Asp-495; these read TLGP and DGTTT.

It belongs to the chaperonin (HSP60) family. As to quaternary structure, forms a cylinder of 14 subunits composed of two heptameric rings stacked back-to-back. Interacts with the co-chaperonin GroES.

It is found in the cytoplasm. It catalyses the reaction ATP + H2O + a folded polypeptide = ADP + phosphate + an unfolded polypeptide.. Functionally, together with its co-chaperonin GroES, plays an essential role in assisting protein folding. The GroEL-GroES system forms a nano-cage that allows encapsulation of the non-native substrate proteins and provides a physical environment optimized to promote and accelerate protein folding. The chain is Chaperonin GroEL from Methanoregula boonei (strain DSM 21154 / JCM 14090 / 6A8).